The sequence spans 238 residues: Probable transcriptional regulatory protein YeeN (238 aa).

The protein belongs to the TACO1 family. YeeN subfamily.

Its subcellular location is the cytoplasm. In Shigella flexneri, this protein is Probable transcriptional regulatory protein YeeN.